Consider the following 600-residue polypeptide: NADH-quinone oxidoreductase subunit C/D (600 aa).

Residues 1-190 (MVNNMTDLTA…SPFELTKAKQ (190 aa)) are NADH dehydrogenase I subunit C. Residues 214 to 600 (DFMFLNLGPN…IDFVMSDVDR (387 aa)) are NADH dehydrogenase I subunit D.

The protein in the N-terminal section; belongs to the complex I 30 kDa subunit family. In the C-terminal section; belongs to the complex I 49 kDa subunit family. As to quaternary structure, NDH-1 is composed of 13 different subunits. Subunits NuoB, CD, E, F, and G constitute the peripheral sector of the complex.

It is found in the cell inner membrane. The catalysed reaction is a quinone + NADH + 5 H(+)(in) = a quinol + NAD(+) + 4 H(+)(out). Functionally, NDH-1 shuttles electrons from NADH, via FMN and iron-sulfur (Fe-S) centers, to quinones in the respiratory chain. The immediate electron acceptor for the enzyme in this species is believed to be ubiquinone. Couples the redox reaction to proton translocation (for every two electrons transferred, four hydrogen ions are translocated across the cytoplasmic membrane), and thus conserves the redox energy in a proton gradient. In Escherichia coli (strain K12 / DH10B), this protein is NADH-quinone oxidoreductase subunit C/D.